Consider the following 318-residue polypeptide: Na(+)-translocating NADH-quinone reductase subunit C (318 aa).

A helical membrane pass occupies residues 13–33; the sequence is WYIILFIFVLSLVAGTLLSSV. Thr-281 is subject to FMN phosphoryl threonine.

It belongs to the NqrC family. As to quaternary structure, composed of six subunits; NqrA, NqrB, NqrC, NqrD, NqrE and NqrF. It depends on FMN as a cofactor.

It localises to the cell inner membrane. It carries out the reaction a ubiquinone + n Na(+)(in) + NADH + H(+) = a ubiquinol + n Na(+)(out) + NAD(+). NQR complex catalyzes the reduction of ubiquinone-1 to ubiquinol by two successive reactions, coupled with the transport of Na(+) ions from the cytoplasm to the periplasm. NqrA to NqrE are probably involved in the second step, the conversion of ubisemiquinone to ubiquinol. This Chlamydia muridarum (strain MoPn / Nigg) protein is Na(+)-translocating NADH-quinone reductase subunit C.